The primary structure comprises 596 residues: Elongation factor 4 (596 aa).

One can recognise a tr-type G domain in the interval Lys-2–Glu-184. GTP is bound by residues Asp-14 to Thr-19 and Asn-131 to Asp-134.

The protein belongs to the TRAFAC class translation factor GTPase superfamily. Classic translation factor GTPase family. LepA subfamily.

Its subcellular location is the cell inner membrane. The enzyme catalyses GTP + H2O = GDP + phosphate + H(+). Functionally, required for accurate and efficient protein synthesis under certain stress conditions. May act as a fidelity factor of the translation reaction, by catalyzing a one-codon backward translocation of tRNAs on improperly translocated ribosomes. Back-translocation proceeds from a post-translocation (POST) complex to a pre-translocation (PRE) complex, thus giving elongation factor G a second chance to translocate the tRNAs correctly. Binds to ribosomes in a GTP-dependent manner. The chain is Elongation factor 4 from Shewanella oneidensis (strain ATCC 700550 / JCM 31522 / CIP 106686 / LMG 19005 / NCIMB 14063 / MR-1).